The chain runs to 342 residues: S-methyl-5'-thioadenosine phosphorylase (342 aa).

Phosphate contacts are provided by residues Thr-51, 99 to 100, and 132 to 133; these read RH and SA. Residue Met-234 coordinates substrate. Ser-235 contributes to the phosphate binding site. 258 to 260 provides a ligand contact to substrate; that stretch reads DYD.

It belongs to the PNP/MTAP phosphorylase family. MTAP subfamily. Homotrimer.

The protein localises to the cytoplasm. Its subcellular location is the nucleus. The enzyme catalyses S-methyl-5'-thioadenosine + phosphate = 5-(methylsulfanyl)-alpha-D-ribose 1-phosphate + adenine. It functions in the pathway amino-acid biosynthesis; L-methionine biosynthesis via salvage pathway; S-methyl-5-thio-alpha-D-ribose 1-phosphate from S-methyl-5'-thioadenosine (phosphorylase route): step 1/1. Its function is as follows. Catalyzes the reversible phosphorylation of S-methyl-5'-thioadenosine (MTA) to adenine and 5-methylthioribose-1-phosphate. Involved in the breakdown of MTA, a major by-product of polyamine biosynthesis. Responsible for the first step in the methionine salvage pathway after MTA has been generated from S-adenosylmethionine. Has broad substrate specificity with 6-aminopurine nucleosides as preferred substrates. The protein is S-methyl-5'-thioadenosine phosphorylase of Aspergillus fumigatus (strain ATCC MYA-4609 / CBS 101355 / FGSC A1100 / Af293) (Neosartorya fumigata).